A 613-amino-acid polypeptide reads, in one-letter code: Chitin synthase 8 (613 aa).

Residues 1–73 (MAVSPTAKRK…PAPLTRPPPP (73 aa)) are disordered. Residue N17 is glycosylated (N-linked (GlcNAc...) asparagine). Residues 18–27 (LSRQSSSART) show a composition bias toward polar residues. A compositionally biased stretch (pro residues) spans 61–73 (ESPPAPLTRPPPP). The next 2 membrane-spanning stretches (helical) occupy residues 119-139 (YSLI…LWNY) and 142-162 (YWYI…IFAI). N-linked (GlcNAc...) asparagine glycans are attached at residues N312, N421, and N471. The next 2 membrane-spanning stretches (helical) occupy residues 556 to 576 (VTTW…AIAL) and 583 to 602 (IFEN…RYAA).

The protein belongs to the chitin synthase family.

It localises to the cell membrane. It carries out the reaction [(1-&gt;4)-N-acetyl-beta-D-glucosaminyl](n) + UDP-N-acetyl-alpha-D-glucosamine = [(1-&gt;4)-N-acetyl-beta-D-glucosaminyl](n+1) + UDP + H(+). Polymerizes chitin, a structural polymer of the cell wall and septum, by transferring the sugar moiety of UDP-GlcNAc to the non-reducing end of the growing chitin polymer. Plays a role in cell wall integrity. Plays a key role in pathogenicity. Likely contributes to post-penetration virulence. The sequence is that of Chitin synthase 8 from Verticillium dahliae (strain VdLs.17 / ATCC MYA-4575 / FGSC 10137) (Verticillium wilt).